Reading from the N-terminus, the 176-residue chain is Crossover junction endodeoxyribonuclease RuvC (176 aa).

Residues Asp-9, Glu-69, and Asp-141 contribute to the active site. Mg(2+) contacts are provided by Asp-9, Glu-69, and Asp-141.

It belongs to the RuvC family. Homodimer which binds Holliday junction (HJ) DNA. The HJ becomes 2-fold symmetrical on binding to RuvC with unstacked arms; it has a different conformation from HJ DNA in complex with RuvA. In the full resolvosome a probable DNA-RuvA(4)-RuvB(12)-RuvC(2) complex forms which resolves the HJ. Mg(2+) serves as cofactor.

It localises to the cytoplasm. The catalysed reaction is Endonucleolytic cleavage at a junction such as a reciprocal single-stranded crossover between two homologous DNA duplexes (Holliday junction).. The RuvA-RuvB-RuvC complex processes Holliday junction (HJ) DNA during genetic recombination and DNA repair. Endonuclease that resolves HJ intermediates. Cleaves cruciform DNA by making single-stranded nicks across the HJ at symmetrical positions within the homologous arms, yielding a 5'-phosphate and a 3'-hydroxyl group; requires a central core of homology in the junction. The consensus cleavage sequence is 5'-(A/T)TT(C/G)-3'. Cleavage occurs on the 3'-side of the TT dinucleotide at the point of strand exchange. HJ branch migration catalyzed by RuvA-RuvB allows RuvC to scan DNA until it finds its consensus sequence, where it cleaves and resolves the cruciform DNA. In Chromobacterium violaceum (strain ATCC 12472 / DSM 30191 / JCM 1249 / CCUG 213 / NBRC 12614 / NCIMB 9131 / NCTC 9757 / MK), this protein is Crossover junction endodeoxyribonuclease RuvC.